Reading from the N-terminus, the 318-residue chain is Trans-prenyltransferase (318 aa).

The helical transmembrane segment at 1 to 21 (MLHLIYISIIVVLIIILISYT) threads the bilayer. Residues lysine 85, arginine 88, and histidine 122 each contribute to the isopentenyl diphosphate site. The Mg(2+) site is built by aspartate 129 and aspartate 135. Arginine 140 serves as a coordination point for dimethylallyl diphosphate. Arginine 141 is a binding site for isopentenyl diphosphate. Dimethylallyl diphosphate is bound by residues lysine 216, threonine 217, and glutamine 254.

This sequence belongs to the FPP/GGPP synthase family. Asfivirus trans-prenyltransferase subfamily. Requires Mg(2+) as cofactor.

It is found in the host endoplasmic reticulum. Its subcellular location is the host membrane. The enzyme catalyses isopentenyl diphosphate + dimethylallyl diphosphate = (2E)-geranyl diphosphate + diphosphate. It carries out the reaction isopentenyl diphosphate + (2E)-geranyl diphosphate = (2E,6E)-farnesyl diphosphate + diphosphate. The catalysed reaction is isopentenyl diphosphate + (2E,6E)-farnesyl diphosphate = (2E,6E,10E)-geranylgeranyl diphosphate + diphosphate. It catalyses the reaction isopentenyl diphosphate + (2E,6E,10E)-geranylgeranyl diphosphate = (2E,6E,10E,14E)-geranylfarnesyl diphosphate + diphosphate. It functions in the pathway isoprenoid biosynthesis; farnesyl diphosphate biosynthesis; farnesyl diphosphate from geranyl diphosphate and isopentenyl diphosphate: step 1/1. Its pathway is isoprenoid biosynthesis; geranyl diphosphate biosynthesis; geranyl diphosphate from dimethylallyl diphosphate and isopentenyl diphosphate: step 1/1. It participates in isoprenoid biosynthesis; geranylgeranyl diphosphate biosynthesis; geranylgeranyl diphosphate from farnesyl diphosphate and isopentenyl diphosphate: step 1/1. Functionally, trans-prenyltransferase that catalyzes the sequential condensation of isopentenyl diphosphate (IPP) with different allylic diphosphates, such as dimethylallyl diphosphate (DMAPP), geranyl diphosphate (GPP), farnesyl diphosphate (FPP) and geranylgeranyl diphosphate (GGPP), farnesyl diphosphate being the best allylic substrate. In African swine fever virus (isolate Tick/South Africa/Pretoriuskop Pr4/1996) (ASFV), this protein is Trans-prenyltransferase.